The primary structure comprises 183 residues: MKSRLLFLGPPGAGKGTQAARLCNANGMSHLSTGDLLRSEVAAGTALGQEAEAVMNRGELVSDALVLAIVESQLKGLSSGGWLLDGFPRTVPQADALEPLLDELKQPIEAVVLLELDDAVLIERLLARGRDDDNEAVIRNRLEVYREKTSPLISFYRDKGLLVSVEANGSVEEITQRITKVLS.

ATP is bound at residue 12-17 (GAGKGT). The NMP stretch occupies residues 32–61 (STGDLLRSEVAAGTALGQEAEAVMNRGELV). AMP is bound by residues T33, R38, 59-61 (ELV), 86-89 (GFPR), and Q93. The segment at 127 to 133 (ARGRDDD) is LID. An ATP-binding site is contributed by R128. Positions 130 and 141 each coordinate AMP. G169 contributes to the ATP binding site.

Belongs to the adenylate kinase family. As to quaternary structure, monomer.

It is found in the cytoplasm. It carries out the reaction AMP + ATP = 2 ADP. It functions in the pathway purine metabolism; AMP biosynthesis via salvage pathway; AMP from ADP: step 1/1. Catalyzes the reversible transfer of the terminal phosphate group between ATP and AMP. Plays an important role in cellular energy homeostasis and in adenine nucleotide metabolism. In Parasynechococcus marenigrum (strain WH8102), this protein is Adenylate kinase.